We begin with the raw amino-acid sequence, 358 residues long: Peptide chain release factor 1 (358 aa).

Q235 is modified (N5-methylglutamine).

It belongs to the prokaryotic/mitochondrial release factor family. Methylated by PrmC. Methylation increases the termination efficiency of RF1.

It localises to the cytoplasm. Functionally, peptide chain release factor 1 directs the termination of translation in response to the peptide chain termination codons UAG and UAA. The polypeptide is Peptide chain release factor 1 (Neisseria gonorrhoeae (strain ATCC 700825 / FA 1090)).